We begin with the raw amino-acid sequence, 239 residues long: NAD(P)H-quinone oxidoreductase subunit K, chloroplastic (239 aa).

Positions 43, 44, 108, and 139 each coordinate [4Fe-4S] cluster. Residues 217 to 239 (KSSVSSRELGNESGKEDVSIQNK) are disordered. Basic and acidic residues predominate over residues 225–239 (LGNESGKEDVSIQNK).

The protein belongs to the complex I 20 kDa subunit family. NDH is composed of at least 16 different subunits, 5 of which are encoded in the nucleus. The cofactor is [4Fe-4S] cluster.

The protein localises to the plastid. The protein resides in the chloroplast thylakoid membrane. The catalysed reaction is a plastoquinone + NADH + (n+1) H(+)(in) = a plastoquinol + NAD(+) + n H(+)(out). It catalyses the reaction a plastoquinone + NADPH + (n+1) H(+)(in) = a plastoquinol + NADP(+) + n H(+)(out). Its function is as follows. NDH shuttles electrons from NAD(P)H:plastoquinone, via FMN and iron-sulfur (Fe-S) centers, to quinones in the photosynthetic chain and possibly in a chloroplast respiratory chain. The immediate electron acceptor for the enzyme in this species is believed to be plastoquinone. Couples the redox reaction to proton translocation, and thus conserves the redox energy in a proton gradient. The protein is NAD(P)H-quinone oxidoreductase subunit K, chloroplastic of Acorus calamus var. americanus (American sweet flag).